Consider the following 183-residue polypeptide: Thioredoxin-like protein CITRX, chloroplastic (183 aa).

Residues 1–81 constitute a chloroplast transit peptide; the sequence is MALVQSRTFP…REDYLVKKLS (81 aa). Residues 82–183 enclose the Thioredoxin domain; it reads AQELQELVKG…MMHDIIDNEM (102 aa). Residues cysteine 106 and cysteine 109 each act as nucleophile in the active site. A disulfide bridge connects residues cysteine 106 and cysteine 109.

Belongs to the thioredoxin family. Plant CITRX-type subfamily. In terms of assembly, interacts with FLN1 and FLN2. Interacts with MRL7.

It localises to the plastid. It is found in the chloroplast. Thiol-disulfide oxidoreductase that plays a role in proper chloroplast development, most likely through regulating plastid-encoded polymerase (PEP) dependent chloroplast transcription. Acts as a component of the transcriptionally active plastid chromosome that is required for plastid gene expression. The chain is Thioredoxin-like protein CITRX, chloroplastic from Arabidopsis thaliana (Mouse-ear cress).